We begin with the raw amino-acid sequence, 287 residues long: Inorganic pyrophosphatase (287 aa).

Arginine 79 is a diphosphate binding site. Residues aspartate 116, aspartate 121, and aspartate 153 each coordinate Mg(2+).

It belongs to the PPase family. Requires Mg(2+) as cofactor.

Its subcellular location is the cytoplasm. It catalyses the reaction diphosphate + H2O = 2 phosphate + H(+). This Candida glabrata (strain ATCC 2001 / BCRC 20586 / JCM 3761 / NBRC 0622 / NRRL Y-65 / CBS 138) (Yeast) protein is Inorganic pyrophosphatase (IPP1).